Reading from the N-terminus, the 429-residue chain is Glutamate-1-semialdehyde 2,1-aminomutase (429 aa).

N6-(pyridoxal phosphate)lysine is present on Lys267.

This sequence belongs to the class-III pyridoxal-phosphate-dependent aminotransferase family. HemL subfamily. Homodimer. Pyridoxal 5'-phosphate is required as a cofactor.

The protein resides in the cytoplasm. It carries out the reaction (S)-4-amino-5-oxopentanoate = 5-aminolevulinate. Its pathway is porphyrin-containing compound metabolism; protoporphyrin-IX biosynthesis; 5-aminolevulinate from L-glutamyl-tRNA(Glu): step 2/2. The polypeptide is Glutamate-1-semialdehyde 2,1-aminomutase (Herpetosiphon aurantiacus (strain ATCC 23779 / DSM 785 / 114-95)).